Here is a 360-residue protein sequence, read N- to C-terminus: DNA replication and repair protein RecF (360 aa).

Residue 30–37 (GQNGSGKT) participates in ATP binding.

This sequence belongs to the RecF family.

It is found in the cytoplasm. The RecF protein is involved in DNA metabolism; it is required for DNA replication and normal SOS inducibility. RecF binds preferentially to single-stranded, linear DNA. It also seems to bind ATP. This is DNA replication and repair protein RecF from Shewanella oneidensis (strain ATCC 700550 / JCM 31522 / CIP 106686 / LMG 19005 / NCIMB 14063 / MR-1).